The sequence spans 173 residues: Crossover junction endodeoxyribonuclease RuvC (173 aa).

Active-site residues include Asp-8, Glu-67, and Asp-139. Mg(2+)-binding residues include Asp-8, Glu-67, and Asp-139.

Belongs to the RuvC family. In terms of assembly, homodimer which binds Holliday junction (HJ) DNA. The HJ becomes 2-fold symmetrical on binding to RuvC with unstacked arms; it has a different conformation from HJ DNA in complex with RuvA. In the full resolvosome a probable DNA-RuvA(4)-RuvB(12)-RuvC(2) complex forms which resolves the HJ. It depends on Mg(2+) as a cofactor.

It localises to the cytoplasm. It carries out the reaction Endonucleolytic cleavage at a junction such as a reciprocal single-stranded crossover between two homologous DNA duplexes (Holliday junction).. In terms of biological role, the RuvA-RuvB-RuvC complex processes Holliday junction (HJ) DNA during genetic recombination and DNA repair. Endonuclease that resolves HJ intermediates. Cleaves cruciform DNA by making single-stranded nicks across the HJ at symmetrical positions within the homologous arms, yielding a 5'-phosphate and a 3'-hydroxyl group; requires a central core of homology in the junction. The consensus cleavage sequence is 5'-(A/T)TT(C/G)-3'. Cleavage occurs on the 3'-side of the TT dinucleotide at the point of strand exchange. HJ branch migration catalyzed by RuvA-RuvB allows RuvC to scan DNA until it finds its consensus sequence, where it cleaves and resolves the cruciform DNA. This is Crossover junction endodeoxyribonuclease RuvC from Yersinia pseudotuberculosis serotype O:1b (strain IP 31758).